Consider the following 453-residue polypeptide: Transcription factor bHLH110 (453 aa).

Disordered regions lie at residues 1–37 (MDSA…YGAS) and 177–197 (SSLP…RGNF). Low complexity-rich tracts occupy residues 8–32 (QLQD…SDPS) and 177–192 (SSLP…SSQS). The bHLH domain occupies 322–371 (VESRSSCPPFKVRKEKLGDRIAALQQLVSPFGKTDTASVLMEAIGYIKFL). The disordered stretch occupies residues 386-411 (SRNRPGKASQLVSQSQEGDEEETRDL).

As to quaternary structure, homodimer.

Its subcellular location is the nucleus. The chain is Transcription factor bHLH110 (BHLH110) from Arabidopsis thaliana (Mouse-ear cress).